Reading from the N-terminus, the 314-residue chain is UPF0761 membrane protein VIBHAR_00593 (314 aa).

6 helical membrane-spanning segments follow: residues tyrosine 41–leucine 61, methionine 104–aspartate 124, phenylalanine 143–valine 163, phenylalanine 185–valine 205, isoleucine 217–isoleucine 237, and alanine 249–isoleucine 269.

This sequence belongs to the UPF0761 family.

Its subcellular location is the cell inner membrane. This is UPF0761 membrane protein VIBHAR_00593 from Vibrio campbellii (strain ATCC BAA-1116).